The primary structure comprises 442 residues: Dihydrolipoyllysine-residue acetyltransferase component of pyruvate dehydrogenase complex (442 aa).

Residues 2 to 77 (AFEFKLPDIG…TVGQTIITFD (76 aa)) form the Lipoyl-binding domain. N6-lipoyllysine is present on Lys-43. The span at 84–97 (LQFKGSDESDDAKT) shows a compositional bias: basic and acidic residues. The disordered stretch occupies residues 84–136 (LQFKGSDESDDAKTEAQVQSTAEAGQDVAKEEQAQEPAKATGAGQQDQAEVDP). Residues 141–178 (IAMPSVRKYAREKGVDIRKVTGSGNNGRVVKEDIDSFV) enclose the Peripheral subunit-binding (PSBD) domain. Residues 182 to 208 (AQEAAPQETAAPQETAAKPAAAPAPEG) show a composition bias toward low complexity. Positions 182–215 (AQEAAPQETAAPQETAAKPAAAPAPEGEFPETRE) are disordered. His-413 is an active-site residue.

The protein belongs to the 2-oxoacid dehydrogenase family. As to quaternary structure, forms a 24-polypeptide structural core with octahedral symmetry. (R)-lipoate is required as a cofactor.

The catalysed reaction is N(6)-[(R)-dihydrolipoyl]-L-lysyl-[protein] + acetyl-CoA = N(6)-[(R)-S(8)-acetyldihydrolipoyl]-L-lysyl-[protein] + CoA. Its function is as follows. The pyruvate dehydrogenase complex catalyzes the overall conversion of pyruvate to acetyl-CoA and CO(2). It contains multiple copies of three enzymatic components: pyruvate dehydrogenase (E1), dihydrolipoamide acetyltransferase (E2) and lipoamide dehydrogenase (E3). Functionally, the B.subtilis PDH complex also possesses branched-chain 2-oxoacid dehydrogenase (BCDH) activity. In Bacillus subtilis (strain 168), this protein is Dihydrolipoyllysine-residue acetyltransferase component of pyruvate dehydrogenase complex (pdhC).